We begin with the raw amino-acid sequence, 124 residues long: Group 1 truncated hemoglobin GlbN (124 aa).

Residues His46, His70, and His117 each contribute to the heme site.

It belongs to the truncated hemoglobin family. Group I subfamily. In terms of assembly, monomer. Requires heme as cofactor.

Functionally, forms a very stable complex with oxygen. The oxygen dissociation rate is 0.011 sec(-1). This chain is Group 1 truncated hemoglobin GlbN (glbN), found in Synechocystis sp. (strain ATCC 27184 / PCC 6803 / Kazusa).